Consider the following 887-residue polypeptide: DNA mismatch repair protein MutS (887 aa).

602-609 (GPNMSGKS) is a binding site for ATP.

Belongs to the DNA mismatch repair MutS family.

Its function is as follows. This protein is involved in the repair of mismatches in DNA. It is possible that it carries out the mismatch recognition step. This protein has a weak ATPase activity. In Staphylococcus saprophyticus subsp. saprophyticus (strain ATCC 15305 / DSM 20229 / NCIMB 8711 / NCTC 7292 / S-41), this protein is DNA mismatch repair protein MutS.